The sequence spans 126 residues: Protein ApaG (126 aa).

The ApaG domain occupies 2-126 (SALDNSIRVE…FRLATPGLLH (125 aa)).

In Shewanella oneidensis (strain ATCC 700550 / JCM 31522 / CIP 106686 / LMG 19005 / NCIMB 14063 / MR-1), this protein is Protein ApaG.